Reading from the N-terminus, the 618-residue chain is Dihydroxy-acid dehydratase (618 aa).

Residue Asp-81 participates in Mg(2+) binding. Cys-122 serves as a coordination point for [2Fe-2S] cluster. 2 residues coordinate Mg(2+): Asp-123 and Lys-124. Lys-124 bears the N6-carboxylysine mark. Cys-197 contributes to the [2Fe-2S] cluster binding site. Glu-493 is a Mg(2+) binding site. The active-site Proton acceptor is the Ser-519.

It belongs to the IlvD/Edd family. As to quaternary structure, homodimer. [2Fe-2S] cluster is required as a cofactor. It depends on Mg(2+) as a cofactor.

It catalyses the reaction (2R)-2,3-dihydroxy-3-methylbutanoate = 3-methyl-2-oxobutanoate + H2O. The catalysed reaction is (2R,3R)-2,3-dihydroxy-3-methylpentanoate = (S)-3-methyl-2-oxopentanoate + H2O. The protein operates within amino-acid biosynthesis; L-isoleucine biosynthesis; L-isoleucine from 2-oxobutanoate: step 3/4. It functions in the pathway amino-acid biosynthesis; L-valine biosynthesis; L-valine from pyruvate: step 3/4. In terms of biological role, functions in the biosynthesis of branched-chain amino acids. Catalyzes the dehydration of (2R,3R)-2,3-dihydroxy-3-methylpentanoate (2,3-dihydroxy-3-methylvalerate) into 2-oxo-3-methylpentanoate (2-oxo-3-methylvalerate) and of (2R)-2,3-dihydroxy-3-methylbutanoate (2,3-dihydroxyisovalerate) into 2-oxo-3-methylbutanoate (2-oxoisovalerate), the penultimate precursor to L-isoleucine and L-valine, respectively. In Bordetella avium (strain 197N), this protein is Dihydroxy-acid dehydratase.